Consider the following 845-residue polypeptide: Translation initiation factor IF-2 (845 aa).

2 stretches are compositionally biased toward basic and acidic residues: residues 139–198 and 206–228; these read EAKR…EKPA and FRSEDRESEQKQRGTKFGRKELH. Residues 139–253 are disordered; the sequence is EAKRQAAEEE…PQKAAPAAKH (115 aa). In terms of domain architecture, tr-type G spans 345–512; that stretch reads SRAAVVTIMG…AILLQAEVME (168 aa). Residues 354-361 form a G1 region; sequence GHVDHGKT. 354 to 361 provides a ligand contact to GTP; sequence GHVDHGKT. Positions 379 to 383 are G2; that stretch reads GITQH. The segment at 400–403 is G3; the sequence is DTPG. GTP is bound by residues 400–404 and 454–457; these read DTPGH and NKID. The segment at 454–457 is G4; sequence NKID. A G5 region spans residues 490–492; it reads SAK.

This sequence belongs to the TRAFAC class translation factor GTPase superfamily. Classic translation factor GTPase family. IF-2 subfamily.

Its subcellular location is the cytoplasm. Its function is as follows. One of the essential components for the initiation of protein synthesis. Protects formylmethionyl-tRNA from spontaneous hydrolysis and promotes its binding to the 30S ribosomal subunits. Also involved in the hydrolysis of GTP during the formation of the 70S ribosomal complex. In Nitrosococcus oceani (strain ATCC 19707 / BCRC 17464 / JCM 30415 / NCIMB 11848 / C-107), this protein is Translation initiation factor IF-2.